Here is a 541-residue protein sequence, read N- to C-terminus: Plasminogen-binding protein PgbB (541 aa).

Basic and acidic residues-rich tracts occupy residues 420 to 434 (HKAKENKQPLEENKV) and 446 to 455 (VKTRRPEPTK). Residues 420–541 (HKAKENKQPL…RRKALEMNKK (122 aa)) form a disordered region. Polar residues predominate over residues 456-476 (DQNNAIQQGETKNNESKNTPI). The segment covering 480-541 (NAAKKEAPKP…RRKALEMNKK (62 aa)) has biased composition (basic and acidic residues).

The protein resides in the cell surface. Functionally, binds plasminogen, specifically, and in a concentration and lysine-dependent manner. Plasminogen is the precursor of plasmin, a serine protease that cleaves fibrin, fibronectin, laminin and vitronectin. Acquisition of plasminogen/plasmin could enable H.pylori to degrade host components. In Helicobacter pylori (strain J99 / ATCC 700824) (Campylobacter pylori J99), this protein is Plasminogen-binding protein PgbB (pgbB).